Consider the following 483-residue polypeptide: NADH-quinone oxidoreductase subunit N (483 aa).

A run of 13 helical transmembrane segments spans residues 9-29 (LVLPEVILGVSALVLLVWGAF), 35-55 (PLFTGAAVLALLGAAVAAVVG), 69-89 (AAATYAKVAIYLSSAVAIVLG), 104-124 (AVLVILAAVGMGVTASAGDLI), 158-178 (FVLGALSSGLLLYGASLIYGF), 201-221 (VGLLFGLVFLICGLAFKVSAA), 234-254 (APTSVVGFFAAAPKLAAMMMF), 272-292 (VLIIASLASVFVGAFAGLAQT), 297-317 (LWAYSSIANVGYALLGVATGG), 325-345 (LLFMTLYMVDVTGFFACLQAL), 368-388 (IAVAMTAFSLSALGMPPFSGF), 404-424 (VLLQWAAVLGLVGSVVAAFYY), and 449-469 (AVGFAAALFSFPVVMVALIWL).

This sequence belongs to the complex I subunit 2 family. NDH-1 is composed of 14 different subunits. Subunits NuoA, H, J, K, L, M, N constitute the membrane sector of the complex.

The protein localises to the cell inner membrane. It catalyses the reaction a quinone + NADH + 5 H(+)(in) = a quinol + NAD(+) + 4 H(+)(out). NDH-1 shuttles electrons from NADH, via FMN and iron-sulfur (Fe-S) centers, to quinones in the respiratory chain. The immediate electron acceptor for the enzyme in this species is believed to be ubiquinone. Couples the redox reaction to proton translocation (for every two electrons transferred, four hydrogen ions are translocated across the cytoplasmic membrane), and thus conserves the redox energy in a proton gradient. The polypeptide is NADH-quinone oxidoreductase subunit N (Caulobacter sp. (strain K31)).